A 355-amino-acid chain; its full sequence is Uroporphyrinogen decarboxylase (355 aa).

Residues 27–31, aspartate 77, tyrosine 154, threonine 209, and histidine 328 each bind substrate; that span reads RQAGR.

It belongs to the uroporphyrinogen decarboxylase family. As to quaternary structure, homodimer.

The protein resides in the cytoplasm. The catalysed reaction is uroporphyrinogen III + 4 H(+) = coproporphyrinogen III + 4 CO2. The protein operates within porphyrin-containing compound metabolism; protoporphyrin-IX biosynthesis; coproporphyrinogen-III from 5-aminolevulinate: step 4/4. Functionally, catalyzes the decarboxylation of four acetate groups of uroporphyrinogen-III to yield coproporphyrinogen-III. The polypeptide is Uroporphyrinogen decarboxylase (Dechloromonas aromatica (strain RCB)).